Here is a 240-residue protein sequence, read N- to C-terminus: tRNA (guanine-N(1)-)-methyltransferase (240 aa).

S-adenosyl-L-methionine is bound by residues G111 and I130–I135.

The protein belongs to the RNA methyltransferase TrmD family. As to quaternary structure, homodimer.

It is found in the cytoplasm. The catalysed reaction is guanosine(37) in tRNA + S-adenosyl-L-methionine = N(1)-methylguanosine(37) in tRNA + S-adenosyl-L-homocysteine + H(+). Specifically methylates guanosine-37 in various tRNAs. The polypeptide is tRNA (guanine-N(1)-)-methyltransferase (Mycoplasma capricolum subsp. capricolum (strain California kid / ATCC 27343 / NCTC 10154)).